The chain runs to 290 residues: Nucleotide-binding protein FN1089 (290 aa).

11–18 (GLSGAGKT) is a binding site for ATP. GTP is bound at residue 56–59 (DIRT).

The protein belongs to the RapZ-like family.

Displays ATPase and GTPase activities. This Fusobacterium nucleatum subsp. nucleatum (strain ATCC 25586 / DSM 15643 / BCRC 10681 / CIP 101130 / JCM 8532 / KCTC 2640 / LMG 13131 / VPI 4355) protein is Nucleotide-binding protein FN1089.